The primary structure comprises 207 residues: dITP/XTP pyrophosphatase (207 aa).

Residue 11 to 16 participates in substrate binding; it reads TGNPGK. Residue Asp72 is the Proton acceptor of the active site. Asp72 contacts Mg(2+). Residues Ser73, 154-157, Lys177, and 182-183 each bind substrate; these read FGYD and HR.

Belongs to the HAM1 NTPase family. In terms of assembly, homodimer. The cofactor is Mg(2+).

It carries out the reaction XTP + H2O = XMP + diphosphate + H(+). The enzyme catalyses dITP + H2O = dIMP + diphosphate + H(+). It catalyses the reaction ITP + H2O = IMP + diphosphate + H(+). Pyrophosphatase that catalyzes the hydrolysis of nucleoside triphosphates to their monophosphate derivatives, with a high preference for the non-canonical purine nucleotides XTP (xanthosine triphosphate), dITP (deoxyinosine triphosphate) and ITP. Seems to function as a house-cleaning enzyme that removes non-canonical purine nucleotides from the nucleotide pool, thus preventing their incorporation into DNA/RNA and avoiding chromosomal lesions. This Thermus thermophilus (strain ATCC 27634 / DSM 579 / HB8) protein is dITP/XTP pyrophosphatase.